The sequence spans 266 residues: Norfluorocurarine synthase 1 (266 aa).

The region spanning 11-121 is the AB hydrolase-1 domain; it reads HFVLVHGAGH…VMPDAVNPPS (111 aa). Residues Ser-86, Asp-216, and His-244 contribute to the active site.

It belongs to the AB hydrolase superfamily. Homodimer.

It carries out the reaction 17-dehydropreakuammicine + H2O = norfluorocurarine + methanol + CO2. It participates in alkaloid biosynthesis. Hydrolase involved in the biosynthesis of curare monoterpene indole alkaloids (MIAs), natural products such as diaboline, a pharmacologically active compound used to regulate blood pressure. Curare alkaloids act as animal glycine receptor antagonists. Catalyzes the conversion of dehydropreakuammicine to norfluorocurarine. This chain is Norfluorocurarine synthase 1, found in Strychnos sp.